The following is a 1223-amino-acid chain: RNA-binding protein 20 (1223 aa).

Disordered regions lie at residues 1–59 (MVLA…QAGL), 238–288 (QAYG…PTSQ), and 306–381 (GEVG…GARR). The segment covering 29–57 (APAPPAPPGPRGMQPPPPPPPPPPPPPQA) has biased composition (pro residues). Polar residues-rich tracts occupy residues 238–261 (QAYGSETDSQPSFLPASASTSGSV) and 314–331 (GPNSQWESPHGFSGQSKP). The U1-type zinc finger occupies 410–444 (HLPHICSICDKKVFDLKDWELHVKGKLHAQKCLLF). The region spanning 520–595 (RVVHICNLPE…EKLLIRMSKR (76 aa)) is the RRM domain. Residues 626-636 (EADRYGPERPR) are compositionally biased toward basic and acidic residues. Disordered regions lie at residues 626-902 (EADR…TNME), 971-995 (EISLKSPKEPPSASTSCPSDMDVEM), and 1042-1102 (MSSP…STQE). Residues 630 to 657 (YGPERPRSRSPVSRSLSPRSHTPSFTSC) are RS. Ser-637, Ser-639, Ser-642, Ser-644, Ser-662, and Ser-681 each carry phosphoserine. Positions 638 to 662 (RSPVSRSLSPRSHTPSFTSCSSSHS) are enriched in low complexity. Basic and acidic residues-rich tracts occupy residues 676–711 (DSWEHSPYARREEERGPAPWRENGEDKRDRTDMWAH) and 718–737 (RQVDKTELDERLEGGRGYRE). Residues 742–752 (SGSPSSLHSVS) are compositionally biased toward low complexity. Ser-744 carries the post-translational modification Phosphoserine. 2 stretches are compositionally biased toward basic and acidic residues: residues 755–774 (KSREDGYYRKEPKGKSDKYL) and 786–852 (RKDE…KEEQ). Residues Ser-803, Ser-861, Ser-872, Ser-887, Ser-889, Ser-973, Ser-976, and Ser-1044 each carry the phosphoserine modification. Positions 864 to 884 (RQEKETESSDAENTRTRKEQD) are enriched in basic and acidic residues. The segment covering 1083-1102 (STPTETDLQSQACQGVSTQE) has biased composition (polar residues). 2 positions are modified to phosphoserine: Ser-1111 and Ser-1116. A Matrin-type zinc finger spans residues 1157-1188 (FYCKLCGLFYTSEEMAKMSHCRSAVHYRNLQK). Positions 1197 to 1223 (GLKETEGAGSPRPEDSGIVPHFERKKL) are disordered. Ser-1206 is modified (phosphoserine).

As to quaternary structure, associates with components of the U1 and U2 U1 small nuclear ribonucleoprotein complexes. Post-translationally, phosphorylation regulates the subcellular localization. Phosphorylation of Ser-637 and Ser-639 in the RS (arginine/serine-rich) region promotes nuclear localization of the protein. In contrast, phosphorylation of the C-terminal disordered region promotes localization to cytoplasmic ribonucleoprotein granules.

The protein resides in the nucleus. It localises to the cytoplasm. It is found in the cytoplasmic ribonucleoprotein granule. In terms of biological role, RNA-binding protein that acts as a regulator of mRNA splicing of a subset of genes encoding key structural proteins involved in cardiac development, such as TTN (Titin), CACNA1C, CAMK2D or PDLIM5/ENH. Acts as a repressor of mRNA splicing: specifically binds the 5'UCUU-3' motif that is predominantly found within intronic sequences of pre-mRNAs, leading to the exclusion of specific exons in target transcripts. RBM20-mediated exon skipping is hormone-dependent and is essential for TTN isoform transition in both cardiac and skeletal muscles. RBM20-mediated exon skipping of TTN provides substrates for the formation of circular RNA (circRNAs) from the TTN transcripts. Together with RBM24, promotes the expression of short isoforms of PDLIM5/ENH in cardiomyocytes. The sequence is that of RNA-binding protein 20 from Sus scrofa (Pig).